The following is a 347-amino-acid chain: NADH-ubiquinone oxidoreductase chain 2 (347 aa).

Transmembrane regions (helical) follow at residues 3–23 (PLTL…TVFS), 59–79 (YFLT…LNIL), 95–115 (PVLI…HFWV), 127–147 (GLIL…QISP), 149–169 (INPT…GWGG), 178–198 (ILAY…TFNP), 200–220 (TMVL…MMFM), 241–261 (VSTI…TGFI), 274–294 (GNII…YFYM), and 325–345 (LITP…ALSV).

It belongs to the complex I subunit 2 family. In terms of assembly, core subunit of respiratory chain NADH dehydrogenase (Complex I) which is composed of 45 different subunits. Interacts with TMEM242.

It is found in the mitochondrion inner membrane. It catalyses the reaction a ubiquinone + NADH + 5 H(+)(in) = a ubiquinol + NAD(+) + 4 H(+)(out). Its function is as follows. Core subunit of the mitochondrial membrane respiratory chain NADH dehydrogenase (Complex I) which catalyzes electron transfer from NADH through the respiratory chain, using ubiquinone as an electron acceptor. Essential for the catalytic activity and assembly of complex I. This Oryctolagus cuniculus (Rabbit) protein is NADH-ubiquinone oxidoreductase chain 2.